The chain runs to 865 residues: Nicotinate catabolism cluster-specific transcription factor (865 aa).

C2H2-type zinc fingers lie at residues 8–32 (HACT…SLNH) and 41–63 (YTCQ…LDRH). The interval 74-168 (GKGVLETRKR…SIDDDGTDPD (95 aa)) is disordered. Residues 77 to 87 (VLETRKRMRRA) carry the Nuclear localization signal(NLS) motif. The span at 78 to 89 (LETRKRMRRAED) shows a compositional bias: basic and acidic residues. Over residues 96-105 (PPKRPSRHQQ) the composition is skewed to basic residues. Positions 108-132 (GPPVGAPLSSSGSVSAGSGRSSRSP) are enriched in low complexity. The Nuclear export signal (NES) motif lies at 285-289 (LDIDL).

The protein resides in the nucleus. Its function is as follows. Transcription factor that specifically regulates the expression of the hxn gene cluster that mediates the degradation of nicotinate and related metabolites. This is Nicotinate catabolism cluster-specific transcription factor from Emericella nidulans (strain FGSC A4 / ATCC 38163 / CBS 112.46 / NRRL 194 / M139) (Aspergillus nidulans).